The chain runs to 525 residues: Glutamate--cysteine ligase (525 aa).

Belongs to the glutamate--cysteine ligase type 1 family. Type 1 subfamily.

It carries out the reaction L-cysteine + L-glutamate + ATP = gamma-L-glutamyl-L-cysteine + ADP + phosphate + H(+). Its pathway is sulfur metabolism; glutathione biosynthesis; glutathione from L-cysteine and L-glutamate: step 1/2. This is Glutamate--cysteine ligase from Alcanivorax borkumensis (strain ATCC 700651 / DSM 11573 / NCIMB 13689 / SK2).